A 1384-amino-acid chain; its full sequence is Enhancer of mRNA-decapping protein 4 (1384 aa).

WD repeat units lie at residues 171-211 (GFTG…SKIQ), 227-274 (NSNR…SNNS), 292-331 (GHAA…QDQP), and 340-390 (HNGQ…CLQT). Disordered stretches follow at residues 471–494 (TEVL…TSES), 551–584 (AMSS…SPAP), and 796–931 (AGAA…MSTE). A compositionally biased stretch (polar residues) spans 482 to 494 (SMTAEGNQGTSES). Over residues 834 to 844 (CSREEIKDRHI) the composition is skewed to basic and acidic residues. Polar residues-rich tracts occupy residues 854-866 (HLTQ…ASAE) and 918-931 (SSQS…MSTE). Residues 930–1012 (TEVQDELLQM…QQLQDQLVQQ (83 aa)) are a coiled coil.

This sequence belongs to the WD repeat EDC4 family.

It is found in the cytoplasm. The protein localises to the P-body. It localises to the nucleus. Its function is as follows. In the process of mRNA degradation, seems to play a role in mRNA decapping. In Danio rerio (Zebrafish), this protein is Enhancer of mRNA-decapping protein 4 (edc4).